The following is a 203-amino-acid chain: Large ribosomal subunit protein uL13 (203 aa).

Ala2 is modified (N-acetylalanine). Arg59 is modified (citrulline). A Phosphoserine modification is found at Ser77. Arg140 is subject to Citrulline. Position 191 is an N6-acetyllysine (Lys191).

The protein belongs to the universal ribosomal protein uL13 family. In terms of assembly, component of the 60S ribosome. Component of the GAIT complex. Interacts with EIF4G1. Phosphorylation at Ser-77 upon interferon-gamma treatment in monocytes involves a DAPK1-DAPK3 kinase cascade and is causing release from the ribosome, association with the GAIT complex and subsequent involvement in transcript-selective translation inhibition. Post-translationally, citrullinated by PADI4.

Its subcellular location is the cytoplasm. Associated with ribosomes but is not required for canonical ribosome function and has extra-ribosomal functions. Component of the GAIT (gamma interferon-activated inhibitor of translation) complex which mediates interferon-gamma-induced transcript-selective translation inhibition in inflammation processes. Upon interferon-gamma activation and subsequent phosphorylation dissociates from the ribosome and assembles into the GAIT complex which binds to stem loop-containing GAIT elements in the 3'-UTR of diverse inflammatory mRNAs (such as ceruplasmin) and suppresses their translation. In the GAIT complex interacts with m7G cap-bound eIF4G at or near the eIF3-binding site and blocks the recruitment of the 43S ribosomal complex. Involved in methylation of rRNA. The sequence is that of Large ribosomal subunit protein uL13 (RPL13A) from Oryctolagus cuniculus (Rabbit).